A 331-amino-acid polypeptide reads, in one-letter code: 6-phosphogluconolactonase (331 aa).

Residue Lys-287 is modified to N6-acetyllysine.

It belongs to the cycloisomerase 2 family.

It catalyses the reaction 6-phospho-D-glucono-1,5-lactone + H2O = 6-phospho-D-gluconate + H(+). It functions in the pathway carbohydrate degradation; pentose phosphate pathway; D-ribulose 5-phosphate from D-glucose 6-phosphate (oxidative stage): step 2/3. Its function is as follows. Catalyzes the hydrolysis of 6-phosphogluconolactone to 6-phosphogluconate. The protein is 6-phosphogluconolactonase of Escherichia coli O127:H6 (strain E2348/69 / EPEC).